The sequence spans 194 residues: Imidazoleglycerol-phosphate dehydratase (194 aa).

This sequence belongs to the imidazoleglycerol-phosphate dehydratase family.

The protein localises to the cytoplasm. The catalysed reaction is D-erythro-1-(imidazol-4-yl)glycerol 3-phosphate = 3-(imidazol-4-yl)-2-oxopropyl phosphate + H2O. It participates in amino-acid biosynthesis; L-histidine biosynthesis; L-histidine from 5-phospho-alpha-D-ribose 1-diphosphate: step 6/9. The sequence is that of Imidazoleglycerol-phosphate dehydratase from Listeria innocua serovar 6a (strain ATCC BAA-680 / CLIP 11262).